The primary structure comprises 57 residues: uncharacterized protein (57 aa).

A helical membrane pass occupies residues 10–27 (FGLLWLIIGSEAFHLNAL). Residues 28–55 (KQDHLERMKQYDAKIRLAKHEFDDTSNE) are a coiled coil.

The protein resides in the membrane. This is an uncharacterized protein from Schizosaccharomyces pombe (strain 972 / ATCC 24843) (Fission yeast).